Reading from the N-terminus, the 127-residue chain is Ycf91-like protein (127 aa).

It belongs to the ycf91 family.

The protein is Ycf91-like protein of Nostoc sp. (strain PCC 7120 / SAG 25.82 / UTEX 2576).